A 274-amino-acid chain; its full sequence is NADH-ubiquinone oxidoreductase chain 2 (274 aa).

The next 8 helical transmembrane spans lie at 28–48 (MIIM…FWFP), 54–74 (LTWM…LMLI), 79–99 (IKYL…IGGL), 107–127 (LMAF…MISE), 128–148 (SIWL…TFMF), 171–191 (FTLF…GFLP), 206–226 (FLLL…LRIC), and 254–274 (LIMT…YFMF).

The protein belongs to the complex I subunit 2 family.

Its subcellular location is the mitochondrion inner membrane. It carries out the reaction a ubiquinone + NADH + 5 H(+)(in) = a ubiquinol + NAD(+) + 4 H(+)(out). In terms of biological role, core subunit of the mitochondrial membrane respiratory chain NADH dehydrogenase (Complex I) that is believed to belong to the minimal assembly required for catalysis. Complex I functions in the transfer of electrons from NADH to the respiratory chain. The immediate electron acceptor for the enzyme is believed to be ubiquinone. This is NADH-ubiquinone oxidoreductase chain 2 (mt:ND2) from Drosophila mauritiana (Fruit fly).